A 279-amino-acid polypeptide reads, in one-letter code: Urease accessory protein UreD (279 aa).

This sequence belongs to the UreD family. UreD, UreF and UreG form a complex that acts as a GTP-hydrolysis-dependent molecular chaperone, activating the urease apoprotein by helping to assemble the nickel containing metallocenter of UreC. The UreE protein probably delivers the nickel.

It localises to the cytoplasm. In terms of biological role, required for maturation of urease via the functional incorporation of the urease nickel metallocenter. The polypeptide is Urease accessory protein UreD (Pseudomonas fluorescens (strain ATCC BAA-477 / NRRL B-23932 / Pf-5)).